The chain runs to 250 residues: Methionine aminopeptidase (250 aa).

His-77 contributes to the substrate binding site. Positions 95, 106, and 169 each coordinate a divalent metal cation. Residue His-176 participates in substrate binding. Glu-202 and Glu-233 together coordinate a divalent metal cation.

This sequence belongs to the peptidase M24A family. Methionine aminopeptidase type 1 subfamily. As to quaternary structure, monomer. The cofactor is Co(2+). It depends on Zn(2+) as a cofactor. Requires Mn(2+) as cofactor. Fe(2+) serves as cofactor.

It carries out the reaction Release of N-terminal amino acids, preferentially methionine, from peptides and arylamides.. Its function is as follows. Removes the N-terminal methionine from nascent proteins. The N-terminal methionine is often cleaved when the second residue in the primary sequence is small and uncharged (Met-Ala-, Cys, Gly, Pro, Ser, Thr, or Val). Requires deformylation of the N(alpha)-formylated initiator methionine before it can be hydrolyzed. This chain is Methionine aminopeptidase, found in Clostridium acetobutylicum (strain ATCC 824 / DSM 792 / JCM 1419 / IAM 19013 / LMG 5710 / NBRC 13948 / NRRL B-527 / VKM B-1787 / 2291 / W).